Here is a 260-residue protein sequence, read N- to C-terminus: 3-methyl-2-oxobutanoate hydroxymethyltransferase (260 aa).

Positions 42 and 81 each coordinate Mg(2+). Residues 42 to 43 (DS), Asp81, and Lys109 each bind 3-methyl-2-oxobutanoate. A Mg(2+)-binding site is contributed by Glu111. Glu178 acts as the Proton acceptor in catalysis.

Belongs to the PanB family. As to quaternary structure, homodecamer; pentamer of dimers. Mg(2+) is required as a cofactor.

The protein resides in the cytoplasm. It carries out the reaction 3-methyl-2-oxobutanoate + (6R)-5,10-methylene-5,6,7,8-tetrahydrofolate + H2O = 2-dehydropantoate + (6S)-5,6,7,8-tetrahydrofolate. The protein operates within cofactor biosynthesis; (R)-pantothenate biosynthesis; (R)-pantoate from 3-methyl-2-oxobutanoate: step 1/2. Its function is as follows. Catalyzes the reversible reaction in which hydroxymethyl group from 5,10-methylenetetrahydrofolate is transferred onto alpha-ketoisovalerate to form ketopantoate. The polypeptide is 3-methyl-2-oxobutanoate hydroxymethyltransferase (Ruthia magnifica subsp. Calyptogena magnifica).